The sequence spans 148 residues: uncharacterized protein (148 aa).

This is an uncharacterized protein from Pyrococcus woesei.